The following is a 347-amino-acid chain: Aurora kinase A- and ninein-interacting protein (347 aa).

An interaction with AURKA region spans residues 182–347 (QREAKRKREG…DSEGNRVIRH (166 aa)). The interaction with RBBP8/CtIP stretch occupies residues 273 to 347 (RDSWSQLFTE…DSEGNRVIRH (75 aa)). A Phosphoserine modification is found at Ser-284. Residues 301–322 (VTNARNQGSGQFPDSPQAQGQD) are compositionally biased toward polar residues. The segment at 301–325 (VTNARNQGSGQFPDSPQAQGQDGPT) is disordered.

It belongs to the AUNIP family. In terms of assembly, interacts (via C-terminus) with AURKA (via C-terminus). Interacts (via N-terminus) with NIN; this interaction blocks NIN phosphorylation by both AURKA and GSK3B. Identified in a complex with NIN and AURKA. Interacts with RBBP8/CtIP.

The protein localises to the nucleus. It localises to the chromosome. It is found in the cytoplasm. Its subcellular location is the cytoskeleton. The protein resides in the microtubule organizing center. The protein localises to the centrosome. It localises to the spindle pole. Functionally, DNA-binding protein that accumulates at DNA double-strand breaks (DSBs) following DNA damage and promotes DNA resection and homologous recombination. Serves as a sensor of DNA damage: binds DNA with a strong preference for DNA substrates that mimic structures generated at stalled replication forks, and anchors RBBP8/CtIP to DSB sites to promote DNA end resection and ensuing homologous recombination repair. Inhibits non-homologous end joining (NHEJ). Required for the dynamic movement of AURKA at the centrosomes and spindle apparatus during the cell cycle. The protein is Aurora kinase A- and ninein-interacting protein of Rattus norvegicus (Rat).